The following is a 67-amino-acid chain: UPF0337 protein BCE_3655 (67 aa).

Belongs to the UPF0337 (CsbD) family.

The protein is UPF0337 protein BCE_3655 of Bacillus cereus (strain ATCC 10987 / NRS 248).